Reading from the N-terminus, the 195-residue chain is PABIR family member 1 (195 aa).

It belongs to the FAM122 family.

The sequence is that of PABIR family member 1 from Homo sapiens (Human).